Reading from the N-terminus, the 461-residue chain is METLFNGTLTVGGRDQETTGFAWWSGNARLINLSGKLLGAHVAHAGLIVFWAGAMNLFEVSHFVPEKPMYEQGLILLPHIATLGYGVGPGGEIIDTFPYFVSGVLHLISSAVLGFGGVYHSLIGPETLEESYPFFGYVWKDKNKMTNILGYHLIMLGLGAWLLVWKAMYFGGVYDTWAPGGGDVRVITNPTTNAAVIFGYLVKSPFGGDGWICSVDNMEDIIGGHIWIGTLEILGGIWHIYTTPWPWARRAFVWSGEAYLSYSLGAIGVMGFIACCMSWFNNTAYPSEFYGPTGPEASQSQAFTFLVRDQRLGANVASAQGPTGLGKYLMRSPTGEIIFGGETMRFWDFRGPWLEPLRGPNGLDLNKLKNDIQPWQERRAAEYMTHAPLGSLNSVGGVATEINAVNFVSPRSWLACSHFCLGFFFFIGHLWHAGRARAAAAGFEKGIDRFDEPVLSMRPLD.

Positions 1–2 are excised as a propeptide; it reads ME. T3 carries the N-acetylthreonine modification. T3 carries the phosphothreonine modification. The next 5 helical transmembrane spans lie at 57-81, 122-143, 166-188, 243-263, and 279-300; these read LFEVSHFVPEKPMYEQGLILLPHIA, LIGPETLEESYPFFGYVWKDKN, KAMYFGGVYDTWAPGGGDVRVIT, TPWPWARRAFVWSGEAYLSYS, and WFNNTAYPSEFYGPTGPEASQS. A [CaMn4O5] cluster-binding site is contributed by E355. Residues 435–459 traverse the membrane as a helical segment; it reads RARAAAAGFEKGIDRFDEPVLSMRP.

This sequence belongs to the PsbB/PsbC family. PsbC subfamily. As to quaternary structure, PSII is composed of 1 copy each of membrane proteins PsbA, PsbB, PsbC, PsbD, PsbE, PsbF, PsbH, PsbI, PsbJ, PsbK, PsbL, PsbM, PsbT, PsbX, PsbY, PsbZ, Psb30/Ycf12, at least 3 peripheral proteins of the oxygen-evolving complex and a large number of cofactors. It forms dimeric complexes. Requires Binds multiple chlorophylls and provides some of the ligands for the Ca-4Mn-5O cluster of the oxygen-evolving complex. It may also provide a ligand for a Cl- that is required for oxygen evolution. PSII binds additional chlorophylls, carotenoids and specific lipids. as cofactor. Phosphorylated in vitro.

Its subcellular location is the plastid. It localises to the chloroplast thylakoid membrane. Its function is as follows. One of the components of the core complex of photosystem II (PSII). It binds chlorophyll and helps catalyze the primary light-induced photochemical processes of PSII. PSII is a light-driven water:plastoquinone oxidoreductase, using light energy to abstract electrons from H(2)O, generating O(2) and a proton gradient subsequently used for ATP formation. The chain is Photosystem II CP43 reaction center protein from Chlamydomonas reinhardtii (Chlamydomonas smithii).